The following is a 584-amino-acid chain: Proteasome-associated ATPase (584 aa).

Residues R8–P90 are a coiled coil. ATP is bound at residue G272–L277. The interval Y583–L584 is docks into pockets in the proteasome alpha-ring.

The protein belongs to the AAA ATPase family. As to quaternary structure, homohexamer. Assembles into a hexameric ring structure that caps the 20S proteasome core. Strongly interacts with the prokaryotic ubiquitin-like protein Pup through a hydrophobic interface; the interacting region of ARC lies in its N-terminal coiled-coil domain. There is one Pup binding site per ARC hexamer ring. Upon ATP-binding, the C-terminus of ARC interacts with the alpha-rings of the proteasome core, possibly by binding to the intersubunit pockets.

It functions in the pathway protein degradation; proteasomal Pup-dependent pathway. Functionally, ATPase which is responsible for recognizing, binding, unfolding and translocation of pupylated proteins into the bacterial 20S proteasome core particle. May be essential for opening the gate of the 20S proteasome via an interaction with its C-terminus, thereby allowing substrate entry and access to the site of proteolysis. Thus, the C-termini of the proteasomal ATPase may function like a 'key in a lock' to induce gate opening and therefore regulate proteolysis. The sequence is that of Proteasome-associated ATPase from Thermobifida fusca (strain YX).